The chain runs to 333 residues: tRNA uridine(34) hydroxylase (333 aa).

The 95-residue stretch at 123–217 (SDPEVILVDT…YLEEIKQEES (95 aa)) folds into the Rhodanese domain. C177 serves as the catalytic Cysteine persulfide intermediate.

Belongs to the TrhO family.

The catalysed reaction is uridine(34) in tRNA + AH2 + O2 = 5-hydroxyuridine(34) in tRNA + A + H2O. In terms of biological role, catalyzes oxygen-dependent 5-hydroxyuridine (ho5U) modification at position 34 in tRNAs. This chain is tRNA uridine(34) hydroxylase, found in Shewanella sp. (strain MR-7).